The sequence spans 88 residues: Phage-like element PBSX protein XkdR (88 aa).

It to B.subtilis YqbR.

The sequence is that of Phage-like element PBSX protein XkdR (xkdR) from Bacillus subtilis (strain 168).